Here is a 657-residue protein sequence, read N- to C-terminus: THO complex subunit 1 (657 aa).

N-acetylmethionine is present on Met-1. A Phosphoserine modification is found at Ser-2. The residue at position 4 (Thr-4) is a Phosphothreonine. A Glycyl lysine isopeptide (Lys-Gly) (interchain with G-Cter in SUMO2) cross-link involves residue Lys-31. Residue Lys-133 is modified to N6-acetyllysine. The tract at residues 133–167 is dock domain; interaction with THOC2; it reads KNYLLRMCNDLLRRLSKSQNTVFCGRIQLFLARLF. Residues 194–222 form a disordered region; it reads QESTLGQKHTEDREEGMDVEEGEMGDEEA. Acidic residues predominate over residues 206–222; the sequence is REEGMDVEEGEMGDEEA. Residues 227 to 397 are dock domain; interaction with THOC2; it reads SIPIDYNLYR…WNSWKNEGCP (171 aa). Lys-300 carries the N6-acetyllysine modification. Residue Lys-408 forms a Glycyl lysine isopeptide (Lys-Gly) (interchain with G-Cter in SUMO2) linkage. The short motif at 414–430 is the Nuclear localization signal element; that stretch reads RKRTAPEDFLGKGPTKK. A disordered region spans residues 533 to 569; that stretch reads LPPPSEEIKTGEDEDEEDNDALLKENESPDVRRDKPV. Ser-537 carries the phosphoserine modification. At Thr-542 the chain carries Phosphothreonine. The segment covering 553-569 has biased composition (basic and acidic residues); it reads ALLKENESPDVRRDKPV. The residue at position 560 (Ser-560) is a Phosphoserine. Residues 570 to 653 form the Death domain; sequence TGEQIEVFAN…DLAESLTNDN (84 aa). Residue Lys-580 forms a Glycyl lysine isopeptide (Lys-Gly) (interchain with G-Cter in SUMO2) linkage. Residue Lys-595 forms a Glycyl lysine isopeptide (Lys-Gly) (interchain with G-Cter in SUMO1); alternate linkage. Residue Lys-595 forms a Glycyl lysine isopeptide (Lys-Gly) (interchain with G-Cter in SUMO2); alternate linkage.

Belongs to the THOC1 family. In terms of assembly, component of the THO subcomplex, which is composed of THOC1, THOC2, THOC3, THOC5, THOC6 and THOC7. The THO subcomplex interacts with DDX39B to form the THO-DDX39B complex which multimerizes into a 28-subunit tetrameric assembly. Component of the transcription/export (TREX) complex at least composed of ALYREF/THOC4, DDX39B, SARNP/CIP29, CHTOP and the THO subcomplex; in the complex interacts with THOC2, THOC5 and THOC7. TREX seems to have a dynamic structure involving ATP-dependent remodeling. Binds to the hypophosphorylated form of RB1. Interacts with RNA polymerase II. Interacts with LUZP4. Post-translationally, expression is altered specifically during apoptosis and is accompanied by the appearance of novel forms with smaller apparent molecular mass. In terms of processing, polyubiquitinated, leading to proteasomal degradation; probably involves NEDD4. In terms of tissue distribution, ubiquitous. Expressed in various cancer cell lines. Expressed at very low levels in normal breast epithelial cells and highly expressed in breast tumors. Expression is strongly associated with an aggressive phenotype of breast tumors and expression correlates with tumor size and the metastatic state of the tumor progression.

It is found in the nucleus speckle. Its subcellular location is the nucleus. The protein resides in the nucleoplasm. It localises to the nucleus matrix. The protein localises to the cytoplasm. In terms of biological role, component of the THO subcomplex of the TREX complex which is thought to couple mRNA transcription, processing and nuclear export, and which specifically associates with spliced mRNA and not with unspliced pre-mRNA. Required for efficient export of polyadenylated RNA. The THOC1-THOC2-THOC3 core complex alone is sufficient to bind export factor NXF1-NXT1 and promote ATPase activity of DDX39B/UAP56. TREX is recruited to spliced mRNAs by a transcription-independent mechanism, binds to mRNA upstream of the exon-junction complex (EJC) and is recruited in a splicing- and cap-dependent manner to a region near the 5' end of the mRNA where it functions in mRNA export to the cytoplasm via the TAP/NXF1 pathway. Regulates transcriptional elongation of a subset of genes. Involved in genome stability by preventing co-transcriptional R-loop formation. May play a role in hair cell formation, hence may be involved in hearing. Its function is as follows. Participates in an apoptotic pathway which is characterized by activation of caspase-6, increases in the expression of BAK1 and BCL2L1 and activation of NF-kappa-B. This pathway does not require p53/TP53, nor does the presence of p53/TP53 affect the efficiency of cell killing. Activates a G2/M cell cycle checkpoint prior to the onset of apoptosis. Apoptosis is inhibited by association with RB1. (Microbial infection) The TREX complex is essential for the export of Kaposi's sarcoma-associated herpesvirus (KSHV) intronless mRNAs and infectious virus production. This is THO complex subunit 1 (THOC1) from Homo sapiens (Human).